A 529-amino-acid polypeptide reads, in one-letter code: Cytochrome P450 monooxygenase 45 (529 aa).

A helical membrane pass occupies residues 24–44 (VLTICILALLTFVLREIVLYF). N-linked (GlcNAc...) asparagine glycosylation is found at N185 and N322. Residue C454 coordinates heme.

Belongs to the cytochrome P450 family. Requires heme as cofactor.

It localises to the membrane. It functions in the pathway secondary metabolite biosynthesis. Functionally, cytochrome P450 monooxygenase that is able to use trans-stilbene as a substrate for oxidation. In Postia placenta (strain ATCC 44394 / Madison 698-R) (Brown rot fungus), this protein is Cytochrome P450 monooxygenase 45.